The chain runs to 142 residues: Transcription antitermination protein NusB (142 aa).

It belongs to the NusB family.

In terms of biological role, involved in transcription antitermination. Required for transcription of ribosomal RNA (rRNA) genes. Binds specifically to the boxA antiterminator sequence of the ribosomal RNA (rrn) operons. The protein is Transcription antitermination protein NusB of Thermotoga petrophila (strain ATCC BAA-488 / DSM 13995 / JCM 10881 / RKU-1).